The following is a 298-amino-acid chain: ADP/ATP translocase 3 (298 aa).

At Met-1 the chain carries N-acetylmethionine. The Mitochondrial intermembrane portion of the chain corresponds to 1–7 (MTEQAIS). Thr-2 carries the N-acetylthreonine; in ADP/ATP translocase 3, N-terminally processed modification. The stretch at 6 to 98 (ISFAKDFLAG…FAFKDKYKQI (93 aa)) is one Solcar 1 repeat. A helical transmembrane segment spans residues 8-37 (FAKDFLAGGIAAAISKTAVAPIERVKLLLQ). Topologically, residues 38–74 (VQHASKQIAADKQYKGIVDCIVRIPKEQGVLSFWRGN) are mitochondrial matrix. At Lys-52 the chain carries N6,N6,N6-trimethyllysine. Residues 75–99 (LANVIRYFPTQALNFAFKDKYKQIF) traverse the membrane as a helical segment. ADP-binding residues include Arg-80 and Lys-92. Residues 100-109 (LGGVDKRTQF) lie on the Mitochondrial intermembrane side of the membrane. An N6-acetyllysine modification is found at Lys-105. Residues 110–130 (WRYFAGNLASGGAAGATSLCF) traverse the membrane as a helical segment. Solcar repeat units follow at residues 111 to 201 (RYFA…AKGM) and 212 to 297 (VSWM…LKKV). At 131 to 178 (VYPLDFARTRLAADVGKSGSEREFRGLGDCLVKITKSDGIRGLYQGFN) the chain is on the mitochondrial matrix side. Residues 179-199 (VSVQGIIIYRAAYFGIYDTAK) traverse the membrane as a helical segment. Residues 200 to 210 (GMLPDPKNTHI) lie on the Mitochondrial intermembrane side of the membrane. The helical transmembrane segment at 211–231 (VVSWMIAQTVTAVAGVVSYPF) threads the bilayer. The Mitochondrial matrix segment spans residues 232–273 (DTVRRRMMMQSGRKGADIMYKGTVDCWRKILKDEGGKAFFKG). Residue Arg-235 coordinates ADP. The tract at residues 235 to 240 (RRRMMM) is important for transport activity. The Nucleotide carrier signature motif signature appears at 235-240 (RRRMMM). The residue at position 268 (Lys-268) is an N6-acetyllysine. A helical membrane pass occupies residues 274 to 291 (AWSNVLRGMGGAFVLVLY). Residues 292 to 298 (DELKKVI) lie on the Mitochondrial intermembrane side of the membrane.

Belongs to the mitochondrial carrier (TC 2.A.29) family. Monomer. Found in a complex with ARL2, ARL2BP and SLC25A6/ANT3. Trimethylated by ANTKMT at Lys-52.

The protein localises to the mitochondrion inner membrane. It is found in the membrane. The catalysed reaction is ADP(in) + ATP(out) = ADP(out) + ATP(in). It catalyses the reaction H(+)(in) = H(+)(out). Its activity is regulated as follows. The matrix-open state (m-state) is inhibited by the membrane-permeable bongkrekic acid (BKA). The cytoplasmic-open state (c-state) is inhibited by the membrane-impermeable toxic inhibitor carboxyatractyloside (CATR). Proton transporter activity is inhibited by ADP:ATP antiporter activity. Its function is as follows. ADP:ATP antiporter that mediates import of ADP into the mitochondrial matrix for ATP synthesis, and export of ATP out to fuel the cell. Cycles between the cytoplasmic-open state (c-state) and the matrix-open state (m-state): operates by the alternating access mechanism with a single substrate-binding site intermittently exposed to either the cytosolic (c-state) or matrix (m-state) side of the inner mitochondrial membrane. In addition to its ADP:ATP antiporter activity, also involved in mitochondrial uncoupling and mitochondrial permeability transition pore (mPTP) activity. Plays a role in mitochondrial uncoupling by acting as a proton transporter: proton transport uncouples the proton flows via the electron transport chain and ATP synthase to reduce the efficiency of ATP production and cause mitochondrial thermogenesis. Proton transporter activity is inhibited by ADP:ATP antiporter activity, suggesting that SLC25A6/ANT3 acts as a master regulator of mitochondrial energy output by maintaining a delicate balance between ATP production (ADP:ATP antiporter activity) and thermogenesis (proton transporter activity). Proton transporter activity requires free fatty acids as cofactor, but does not transport it. Also plays a key role in mPTP opening, a non-specific pore that enables free passage of the mitochondrial membranes to solutes of up to 1.5 kDa, and which contributes to cell death. It is however unclear if SLC25A6/ANT3 constitutes a pore-forming component of mPTP or regulates it. This is ADP/ATP translocase 3 from Bos taurus (Bovine).